We begin with the raw amino-acid sequence, 241 residues long: Interleukin-6 (241 aa).

A signal peptide spans 1-26; sequence MNSFTSALRPGPLGCSLALLLVVATA. Residues 32–51 form a disordered region; that stretch reads PVREDSNTKASPDKTLTPPG. Cystine bridges form between Cys72/Cys78 and Cys101/Cys111. An N-linked (GlcNAc...) asparagine glycan is attached at Asn108.

Belongs to the IL-6 superfamily. In terms of assembly, component of a hexamer of two molecules each of IL6, IL6R and IL6ST; first binds to IL6R to associate with the signaling subunit IL6ST. Interacts with IL6R (via the N-terminal ectodomain); this interaction may be affected by IL6R-binding with SORL1, hence decreasing IL6 cis signaling. Interacts with SORL1 (via the N-terminal ectodomain); this interaction leads to IL6 internalization and lysosomal degradation. May form a trimeric complex with the soluble SORL1 ectodomain and soluble IL6R receptor; this interaction might stabilize circulating IL6, hence promoting IL6 trans signaling.

The protein localises to the secreted. Functionally, cytokine with a wide variety of biological functions in immunity, tissue regeneration, and metabolism. Binds to IL6R, then the complex associates to the signaling subunit IL6ST/gp130 to trigger the intracellular IL6-signaling pathway. The interaction with the membrane-bound IL6R and IL6ST stimulates 'classic signaling', whereas the binding of IL6 and soluble IL6R to IL6ST stimulates 'trans-signaling'. Alternatively, 'cluster signaling' occurs when membrane-bound IL6:IL6R complexes on transmitter cells activate IL6ST receptors on neighboring receiver cells. In terms of biological role, IL6 is a potent inducer of the acute phase response. Rapid production of IL6 contributes to host defense during infection and tissue injury, but excessive IL6 synthesis is involved in disease pathology. In the innate immune response, is synthesized by myeloid cells, such as macrophages and dendritic cells, upon recognition of pathogens through toll-like receptors (TLRs) at the site of infection or tissue injury. In the adaptive immune response, is required for the differentiation of B cells into immunoglobulin-secreting cells. Plays a major role in the differentiation of CD4(+) T cell subsets. Essential factor for the development of T follicular helper (Tfh) cells that are required for the induction of germinal-center formation. Required to drive naive CD4(+) T cells to the Th17 lineage. Also required for proliferation of myeloma cells and the survival of plasmablast cells. Acts as an essential factor in bone homeostasis and on vessels directly or indirectly by induction of VEGF, resulting in increased angiogenesis activity and vascular permeability. Induces, through 'trans-signaling' and synergistically with IL1B and TNF, the production of VEGF. Involved in metabolic controls, is discharged into the bloodstream after muscle contraction increasing lipolysis and improving insulin resistance. 'Trans-signaling' in central nervous system also regulates energy and glucose homeostasis. Mediates, through GLP-1, crosstalk between insulin-sensitive tissues, intestinal L cells and pancreatic islets to adapt to changes in insulin demand. Also acts as a myokine. Plays a protective role during liver injury, being required for maintenance of tissue regeneration. Also has a pivotal role in iron metabolism by regulating HAMP/hepcidin expression upon inflammation or bacterial infection. Through activation of IL6ST-YAP-NOTCH pathway, induces inflammation-induced epithelial regeneration. The chain is Interleukin-6 (IL6) from Oryctolagus cuniculus (Rabbit).